A 351-amino-acid chain; its full sequence is Autoinducer 2 import system permease protein LsrC (351 aa).

Helical transmembrane passes span 14–34, 39–59, 70–90, 93–113, 115–135, 155–175, 213–233, 252–272, and 284–304; these read LLAI…YFSL, MIFS…LVML, ITGL…GLAA, LFAL…VTWL, IPAI…MLLL, ILFS…AMAW, MNGV…GFIP, GISL…AFLL, and LPAW…LVFD.

The protein belongs to the binding-protein-dependent transport system permease family. AraH/RbsC subfamily. As to quaternary structure, the complex is composed of two ATP-binding proteins (LsrA), two transmembrane proteins (LsrC and LsrD) and a solute-binding protein (LsrB).

The protein localises to the cell inner membrane. In terms of biological role, part of the ABC transporter complex LsrABCD involved in autoinducer 2 (AI-2) import. Probably responsible for the translocation of the substrate across the membrane. The chain is Autoinducer 2 import system permease protein LsrC (lsrC) from Yersinia pestis bv. Antiqua (strain Antiqua).